We begin with the raw amino-acid sequence, 494 residues long: Aspartyl/glutamyl-tRNA(Asn/Gln) amidotransferase subunit B (494 aa).

It belongs to the GatB/GatE family. GatB subfamily. In terms of assembly, heterotrimer of A, B and C subunits.

It carries out the reaction L-glutamyl-tRNA(Gln) + L-glutamine + ATP + H2O = L-glutaminyl-tRNA(Gln) + L-glutamate + ADP + phosphate + H(+). It catalyses the reaction L-aspartyl-tRNA(Asn) + L-glutamine + ATP + H2O = L-asparaginyl-tRNA(Asn) + L-glutamate + ADP + phosphate + 2 H(+). Functionally, allows the formation of correctly charged Asn-tRNA(Asn) or Gln-tRNA(Gln) through the transamidation of misacylated Asp-tRNA(Asn) or Glu-tRNA(Gln) in organisms which lack either or both of asparaginyl-tRNA or glutaminyl-tRNA synthetases. The reaction takes place in the presence of glutamine and ATP through an activated phospho-Asp-tRNA(Asn) or phospho-Glu-tRNA(Gln). This is Aspartyl/glutamyl-tRNA(Asn/Gln) amidotransferase subunit B from Rhodopseudomonas palustris (strain BisB5).